The sequence spans 400 residues: Unsaturated glucuronyl hydrolase (400 aa).

The N-terminal stretch at 1–20 (MRKLVYLVLVLGLTFLNVRC) is a signal peptide. Catalysis depends on aspartate 120, which acts as the Nucleophile. Aspartate 181 (proton donor) is an active-site residue.

The protein belongs to the glycosyl hydrolase 88 family.

The protein resides in the cell surface. In terms of biological role, unsaturated glucuronyl hydrolase involved in ulvan degradation. Ulvan is the main polysaccharide component of the Ulvales (green seaweed) cell wall. It is composed of disaccharide building blocks comprising 3-sulfated rhamnose (Rha3S) linked to D-glucuronic acid (GlcA), L-iduronic acid (IduA), or D-xylose (Xyl). Unsaturated glucuronyl hydrolase catalyzes the cleavage of the unsaturated 4-deoxy-L-threo-hex-4-enopyranosiduronic acid (deltaUA) at the non-reducing end of ulvan oligomers, thus forming 5-dehydro-4-deoxy-D-glucuronate. The protein is Unsaturated glucuronyl hydrolase of Formosa agariphila (strain DSM 15362 / KCTC 12365 / LMG 23005 / KMM 3901 / M-2Alg 35-1).